The primary structure comprises 165 residues: UPF0254 protein MMP0935 (165 aa).

Belongs to the UPF0254 family.

The polypeptide is UPF0254 protein MMP0935 (Methanococcus maripaludis (strain DSM 14266 / JCM 13030 / NBRC 101832 / S2 / LL)).